The primary structure comprises 356 residues: Tungsten-containing aldehyde ferredoxin oxidoreductase cofactor-modifying protein (356 aa).

In terms of domain architecture, Radical SAM core spans 1-214 (MKYLYLEITS…PIVNELYKIA (214 aa)). [4Fe-4S] cluster contacts are provided by Cys-12, Cys-16, and Cys-19.

It belongs to the radical SAM superfamily. It depends on [4Fe-4S] cluster as a cofactor.

In terms of biological role, involved in the biosynthesis of a molybdopterin-based tungsten cofactor. This Pyrococcus furiosus (strain ATCC 43587 / DSM 3638 / JCM 8422 / Vc1) protein is Tungsten-containing aldehyde ferredoxin oxidoreductase cofactor-modifying protein (cmo).